Consider the following 419-residue polypeptide: Histidine--tRNA ligase (419 aa).

It belongs to the class-II aminoacyl-tRNA synthetase family. In terms of assembly, homodimer.

The protein localises to the cytoplasm. It catalyses the reaction tRNA(His) + L-histidine + ATP = L-histidyl-tRNA(His) + AMP + diphosphate + H(+). This chain is Histidine--tRNA ligase, found in Thiobacillus denitrificans (strain ATCC 25259 / T1).